A 417-amino-acid chain; its full sequence is L-rhamnose isomerase (417 aa).

Mn(2+)-binding residues include His-260, Asp-292, and Asp-294.

This sequence belongs to the rhamnose isomerase family. Mn(2+) serves as cofactor.

The protein localises to the cytoplasm. It carries out the reaction L-rhamnopyranose = L-rhamnulose. Its pathway is carbohydrate degradation; L-rhamnose degradation; glycerone phosphate from L-rhamnose: step 1/3. Functionally, catalyzes the interconversion of L-rhamnose and L-rhamnulose. In Mannheimia succiniciproducens (strain KCTC 0769BP / MBEL55E), this protein is L-rhamnose isomerase.